The primary structure comprises 461 residues: Steroidogenic factor 1 (461 aa).

The segment at residues 10–85 is a DNA-binding region (nuclear receptor); it reads DELCPVCGDK…VGMRLEAVRA (76 aa). An NR C4-type zinc finger spans residues 13–33; sequence CPVCGDKVSGYHYGLLTCESC. N6-acetyllysine occurs at positions 34, 38, and 72. Residues 49 to 73 form an NR C4-type zinc finger; sequence CTESQSCKIDKTQRKRCPFCRFQKC. Lys119 is covalently cross-linked (Glycyl lysine isopeptide (Lys-Gly) (interchain with G-Cter in SUMO)). Residues 119 to 157 form a disordered region; sequence KLETGPPMGVPPPPPPAPDYVLPPSLHGPEPKGLAAGPP. Residues 126-136 are compositionally biased toward pro residues; the sequence is MGVPPPPPPAP. Lys194 participates in a covalent cross-link: Glycyl lysine isopeptide (Lys-Gly) (interchain with G-Cter in SUMO). A Phosphoserine; by CDK7 modification is found at Ser203. The NR LBD domain occupies 222–459; the sequence is NVPELILQLL…NLLIEMLQAK (238 aa). The interval 230–461 is important for dimerization; it reads LLQLEPDEDQ…LIEMLQAKQT (232 aa). Positions 341, 436, and 440 each coordinate a 1,2-diacyl-sn-glycero-3-phosphocholine. 3 residues coordinate a 1,2-diacylglycero-3-phosphoethanolamine: Gly341, Tyr436, and Lys440.

The protein belongs to the nuclear hormone receptor family. NR5 subfamily. Binds DNA as a monomer. Interacts with NR0B2 and PPARGC1A. Part of a complex consisting of SFPQ, NONO and NR5A1. Interacts with NCOA2. Interacts with DGKQ and CDK7. Binds to and activated by HIPK3. In terms of processing, acetylation stimulates the transcriptional activity. Sumoylation reduces CDK7-mediated phosphorylation on Ser-203. Post-translationally, phosphorylated on Ser-203 by CDK7. This phosphorylation promotes transcriptional activity. In terms of tissue distribution, high expressed in the adrenal cortex, the ovary, the testis, and the spleen.

Its subcellular location is the nucleus. Its function is as follows. Transcriptional activator. Essential for sexual differentiation and formation of the primary steroidogenic tissues. Binds to the Ad4 site found in the promoter region of steroidogenic P450 genes such as CYP11A, CYP11B and CYP21B. Also regulates the AMH/Muellerian inhibiting substance gene as well as the AHCH and STAR genes. 5'-YCAAGGYC-3' and 5'-RRAGGTCA-3' are the consensus sequences for the recognition by NR5A1. The SFPQ-NONO-NR5A1 complex binds to the CYP17 promoter and regulates basal and cAMP-dependent transcriptional activity. Binds phosphatidylcholine. Binds phospholipids with a phosphatidylinositol (PI) headgroup, in particular PI(3,4)P2 and PI(3,4,5)P3. Activated by the phosphorylation of NR5A1 by HIPK3 leading to increased steroidogenic gene expression upon cAMP signaling pathway stimulation. This is Steroidogenic factor 1 (NR5A1) from Homo sapiens (Human).